Consider the following 629-residue polypeptide: tRNA uridine 5-carboxymethylaminomethyl modification enzyme MnmG (629 aa).

Residues 14–19 (GAGHAG), valine 126, and serine 181 each bind FAD. Position 273 to 287 (273 to 287 (GPRYCPSIEDKVVRF)) interacts with NAD(+). Glutamine 370 serves as a coordination point for FAD.

This sequence belongs to the MnmG family. Homodimer. Heterotetramer of two MnmE and two MnmG subunits. The cofactor is FAD.

Its subcellular location is the cytoplasm. Its function is as follows. NAD-binding protein involved in the addition of a carboxymethylaminomethyl (cmnm) group at the wobble position (U34) of certain tRNAs, forming tRNA-cmnm(5)s(2)U34. The chain is tRNA uridine 5-carboxymethylaminomethyl modification enzyme MnmG from Bacillus mycoides (strain KBAB4) (Bacillus weihenstephanensis).